The following is a 564-amino-acid chain: CTP synthase (564 aa).

Residues 1-265 (MTKFVFVTGG…DEIVCHRLDI (265 aa)) form an amidoligase domain region. Ser13 contributes to the CTP binding site. Residue Ser13 coordinates UTP. ATP-binding positions include 14-19 (SLGKGI) and Asp71. Mg(2+)-binding residues include Asp71 and Glu139. CTP contacts are provided by residues 146 to 148 (DIE), 186 to 191 (KTKPTQ), and Lys222. Residues 186-191 (KTKPTQ) and Lys222 each bind UTP. Positions 290-543 (SIALVGKYVD…IQAAISFAGQ (254 aa)) constitute a Glutamine amidotransferase type-1 domain. Gly351 provides a ligand contact to L-glutamine. Cys378 functions as the Nucleophile; for glutamine hydrolysis in the catalytic mechanism. Residues 379–382 (LGMQ), Glu402, and Arg469 each bind L-glutamine. Active-site residues include His516 and Glu518.

It belongs to the CTP synthase family. Homotetramer.

It carries out the reaction UTP + L-glutamine + ATP + H2O = CTP + L-glutamate + ADP + phosphate + 2 H(+). The enzyme catalyses L-glutamine + H2O = L-glutamate + NH4(+). It catalyses the reaction UTP + NH4(+) + ATP = CTP + ADP + phosphate + 2 H(+). Its pathway is pyrimidine metabolism; CTP biosynthesis via de novo pathway; CTP from UDP: step 2/2. With respect to regulation, allosterically activated by GTP, when glutamine is the substrate; GTP has no effect on the reaction when ammonia is the substrate. The allosteric effector GTP functions by stabilizing the protein conformation that binds the tetrahedral intermediate(s) formed during glutamine hydrolysis. Inhibited by the product CTP, via allosteric rather than competitive inhibition. Its function is as follows. Catalyzes the ATP-dependent amination of UTP to CTP with either L-glutamine or ammonia as the source of nitrogen. Regulates intracellular CTP levels through interactions with the four ribonucleotide triphosphates. The chain is CTP synthase from Nitrosomonas europaea (strain ATCC 19718 / CIP 103999 / KCTC 2705 / NBRC 14298).